A 255-amino-acid chain; its full sequence is Hydroxyacylglutathione hydrolase (255 aa).

7 residues coordinate Zn(2+): histidine 56, histidine 58, aspartate 60, histidine 61, histidine 114, aspartate 133, and histidine 171.

The protein belongs to the metallo-beta-lactamase superfamily. Glyoxalase II family. In terms of assembly, monomer. It depends on Zn(2+) as a cofactor.

The catalysed reaction is an S-(2-hydroxyacyl)glutathione + H2O = a 2-hydroxy carboxylate + glutathione + H(+). It functions in the pathway secondary metabolite metabolism; methylglyoxal degradation; (R)-lactate from methylglyoxal: step 2/2. Its function is as follows. Thiolesterase that catalyzes the hydrolysis of S-D-lactoyl-glutathione to form glutathione and D-lactic acid. This is Hydroxyacylglutathione hydrolase from Cereibacter sphaeroides (strain ATCC 17025 / ATH 2.4.3) (Rhodobacter sphaeroides).